A 396-amino-acid chain; its full sequence is Pre-mRNA-splicing regulator WTAP (396 aa).

Residue methionine 1 is modified to N-acetylmethionine. Serine 14 is modified (phosphoserine). Low complexity-rich tracts occupy residues 240–257 and 278–291; these read QQQQ…TTSS and SNGS…SGSG. Residues 240–396 form a disordered region; that stretch reads QQQQSQASAP…SSVNVQGAVL (157 aa). A phosphoserine mark is found at serine 297, serine 305, serine 306, and serine 341. A compositionally biased stretch (low complexity) spans 305-316; it reads SSSGNGNKASNS. Positions 340–351 are enriched in polar residues; sequence DSPTGSENSLTH. A Phosphothreonine modification is found at threonine 350. Over residues 352–368 the composition is skewed to basic and acidic residues; sequence HSNDTDSSHDPQEEKAV. Over residues 380–396 the composition is skewed to polar residues; sequence HVQNGLDSSVNVQGAVL. The residue at position 388 (serine 388) is a Phosphoserine.

Belongs to the fl(2)d family. Component of the WMM complex, a N6-methyltransferase complex composed of a catalytic subcomplex, named MAC, and of an associated subcomplex, named MACOM. The MAC subcomplex is composed of METTL3 and METTL14. The MACOM subcomplex is composed of WTAP, ZC3H13, CBLL1/HAKAI, VIRMA, and, in some cases of RBM15 (RBM15 or RBM15B). Interacts with WT1. Also a component of a MACOM-like complex, named WTAP complex, composed of WTAP, ZC3H13, CBLL1, VIRMA, RBM15, BCLAF1 and THRAP3. Interacts with CPNE4 (via VWFA domain).

The protein resides in the nucleus speckle. It is found in the nucleus. The protein localises to the nucleoplasm. It localises to the cytoplasm. Functionally, associated component of the WMM complex, a complex that mediates N6-methyladenosine (m6A) methylation of RNAs, a modification that plays a role in the efficiency of mRNA splicing and RNA processing. Acts as a key regulator of m6A methylation by promoting m6A methylation of mRNAs at the 3'-UTR. Required for accumulation of METTL3 and METTL14 to nuclear speckle. Acts as a mRNA splicing regulator. Regulates G2/M cell-cycle transition by binding to the 3' UTR of CCNA2, which enhances its stability. Impairs WT1 DNA-binding ability and inhibits expression of WT1 target genes. The polypeptide is Pre-mRNA-splicing regulator WTAP (Mus musculus (Mouse)).